The sequence spans 229 residues: Ribosomal RNA large subunit methyltransferase E (229 aa).

Residues methionine 1–alanine 20 form a disordered region. S-adenosyl-L-methionine-binding residues include glycine 75, tryptophan 77, aspartate 94, aspartate 110, and aspartate 134. Lysine 174 acts as the Proton acceptor in catalysis.

It belongs to the class I-like SAM-binding methyltransferase superfamily. RNA methyltransferase RlmE family.

It is found in the cytoplasm. It catalyses the reaction uridine(2552) in 23S rRNA + S-adenosyl-L-methionine = 2'-O-methyluridine(2552) in 23S rRNA + S-adenosyl-L-homocysteine + H(+). Specifically methylates the uridine in position 2552 of 23S rRNA at the 2'-O position of the ribose in the fully assembled 50S ribosomal subunit. The polypeptide is Ribosomal RNA large subunit methyltransferase E (Rhizorhabdus wittichii (strain DSM 6014 / CCUG 31198 / JCM 15750 / NBRC 105917 / EY 4224 / RW1) (Sphingomonas wittichii)).